A 329-amino-acid polypeptide reads, in one-letter code: DNA-directed RNA polymerase subunit alpha (329 aa).

Positions 1 to 235 (MQGSVTEFLK…EQLEAFVDLR (235 aa)) are alpha N-terminal domain (alpha-NTD). The segment at 249-329 (FDPILLRPVD…NWPPASIADE (81 aa)) is alpha C-terminal domain (alpha-CTD).

The protein belongs to the RNA polymerase alpha chain family. In terms of assembly, homodimer. The RNAP catalytic core consists of 2 alpha, 1 beta, 1 beta' and 1 omega subunit. When a sigma factor is associated with the core the holoenzyme is formed, which can initiate transcription.

The catalysed reaction is RNA(n) + a ribonucleoside 5'-triphosphate = RNA(n+1) + diphosphate. Its function is as follows. DNA-dependent RNA polymerase catalyzes the transcription of DNA into RNA using the four ribonucleoside triphosphates as substrates. This is DNA-directed RNA polymerase subunit alpha from Shigella flexneri serotype 5b (strain 8401).